We begin with the raw amino-acid sequence, 215 residues long: Cytochrome b6 (215 aa).

Residues 32 to 52 (IFYCIGGITFTCFLVQVATGF) traverse the membrane as a helical segment. Heme c is bound at residue Cys35. Heme b contacts are provided by Gly37, Arg83, His86, His100, Arg103, and Arg114. A helical transmembrane segment spans residues 90–110 (ASMMVLMMVLHVFRVYLTGGF). A run of 2 helical transmembrane segments spans residues 116-136 (LTWVTGVIMAVCTVSFGVTGY) and 186-206 (LHTFVLPLLTAVFMLMHFLMI). Heme b contacts are provided by His187 and His202. 2 residues coordinate heme c: Arg207 and Ile211. Position 212 (Ser212) interacts with heme b.

Belongs to the cytochrome b family. PetB subfamily. In terms of assembly, the 4 large subunits of the cytochrome b6-f complex are cytochrome b6, subunit IV (17 kDa polypeptide, PetD), cytochrome f and the Rieske protein, while the 4 small subunits are PetG, PetL, PetM and PetN. The complex functions as a dimer. Heme b is required as a cofactor. It depends on heme c as a cofactor. The N-terminus is blocked.

The protein localises to the plastid. It localises to the chloroplast thylakoid membrane. Component of the cytochrome b6-f complex, which mediates electron transfer between photosystem II (PSII) and photosystem I (PSI), cyclic electron flow around PSI, and state transitions. This Chlamydomonas reinhardtii (Chlamydomonas smithii) protein is Cytochrome b6.